The chain runs to 3072 residues: E1A-binding protein p400 (3072 aa).

The span at 1–22 shows a compositional bias: polar residues; the sequence is MHHGSGPQNVQHQLQRSRSFTG. Disordered regions lie at residues 1–55, 125–149, and 222–250; these read MHHG…SPGY, PMSQ…LQNV, and LSQP…TGLQ. Pro residues predominate over residues 31 to 40; that stretch reads PNLPPSPAAP. Composition is skewed to low complexity over residues 41-53 and 125-136; these read FAPS…PQSP and PMSQQVQTQSPT. 2 positions are modified to phosphoserine: Ser-52 and Ser-134. Ser-315 and Ser-321 each carry phosphoserine. 3 disordered regions span residues 485–519, 544–601, and 635–769; these read SLTG…KRPR, MPTV…ASVP, and APIP…SQDK. Low complexity predominate over residues 556-569; it reads QATQLTGQKQSQQQ. Positions 570 to 583 are enriched in polar residues; the sequence is YDPSTGPPVQNAAS. Residues 586-599 show a composition bias toward pro residues; that stretch reads TPPPQLPARLPPAS. Low complexity-rich tracts occupy residues 646-657, 668-682, and 695-710; these read PAPSSQPAQPAL, QTSQ…VAST, and SLPT…PVSG. 2 stretches are compositionally biased toward polar residues: residues 724–741 and 754–765; these read NRPS…TSRS and SPAQNAASSQDG. 3 positions are modified to phosphoserine: Ser-735, Ser-741, and Ser-754. Residues 798–870 form the HSA domain; sequence LPKLQEAPRP…EQSRLRRIAA (73 aa). Positions 914-928 are enriched in basic and acidic residues; sequence ESRLKGFDTSPEHSL. 2 disordered regions span residues 914–952 and 997–1024; these read ESRL…EDEE and FQWP…DRES. Thr-922 is modified (phosphothreonine). Ser-923, Ser-927, and Ser-940 each carry phosphoserine. Thr-944 is modified (phosphothreonine). The tract at residues 950–1364 is interactions with RUVBL1 and RUVBL2; sequence DEEETIEEEE…SVLSVLTRLQ (415 aa). Phosphoserine is present on residues Ser-1009 and Ser-1010. The 166-residue stretch at 1102-1267 folds into the Helicase ATP-binding domain; that stretch reads AKLYRKNLNG…WTMVHFLIPG (166 aa). 1115–1122 lines the ATP pocket; sequence DEAGLGKT. Positions 1218–1221 match the DEAD box-like motif; it reads DEMQ. An N6-acetyllysine modification is found at Lys-1471. Positions 1473–1503 are disordered; the sequence is EGRTVAFPSTHPPRMANTNTSTATPQGQVRG. Positions 1488 to 1499 are enriched in polar residues; it reads ANTNTSTATPQG. Phosphoserine occurs at positions 1646 and 1650. Positions 1815-1972 constitute a Helicase C-terminal domain; that stretch reads KLEALAILLQ…GNDYSMAFLT (158 aa). 2 disordered regions span residues 2033 to 2062 and 2203 to 2227; these read AQRS…DEEP and KERK…GEAV. A compositionally biased stretch (low complexity) spans 2043-2053; it reads GSSSVAVSSDS. An N6-acetyllysine mark is found at Lys-2265 and Lys-2272. A Myb-like domain is found at 2276 to 2345; it reads EPAQDSPDWL…QCRNRYENVI (70 aa). The interaction with ZNF42 stretch occupies residues 2440-2699; sequence KEKKALADQQ…QQQQQQQQQT (260 aa). The segment at 2441-2534 is disordered; it reads EKKALADQQK…PQSKGQPTMT (94 aa). Low complexity-rich tracts occupy residues 2446–2455 and 2463–2478; these read ADQQKAQQPP and QQQQ…QQQQ. The segment covering 2479–2493 has biased composition (pro residues); the sequence is QPPPPPQQPPPPVPQ. The span at 2494–2526 shows a compositional bias: low complexity; it reads PQAASSQTPAGQPAVQPQPQPQVQTQPQPVQPQ. At Ser-2614 the chain carries Phosphoserine. Disordered regions lie at residues 2734–2790 and 3028–3072; these read QKMQ…TGTT and ASLQ…PPCQ. Residues 2739–2754 show a composition bias toward pro residues; it reads PPQPPPPQAQPGPPQQ. Low complexity predominate over residues 2755–2775; it reads PAQVQVQTPQPPQQQQSPQLT. Positions 3042-3053 are enriched in polar residues; sequence PASSDSPSQQPK.

This sequence belongs to the SNF2/RAD54 helicase family. SWR1 subfamily. Component of the NuA4 histone acetyltransferase complex which contains the catalytic subunit KAT5/TIP60 and the subunits EP400, TRRAP/PAF400, BRD8/SMAP, EPC1, DMAP1/DNMAP1, RUVBL1/TIP49, RUVBL2, ING3, actin, ACTL6A/BAF53A, MORF4L1/MRG15, MORF4L2/MRGX, MRGBP, YEATS4/GAS41, VPS72/YL1 and MEAF6. May also participate in the formation of NuA4 related complexes which lack the KAT5/TIP60 catalytic subunit, but which include the SWI/SNF related protein SRCAP. The NuA4 complex interacts with MYC. EP400 interacts with TRRAP, RUVBL1 and RUVBL2. Component of a SWR1-like complex. Interacts with ZNF42. Interacts with PHF5A. Expressed in brain, thymus, lung, liver, spleen, kidney, colon and bone marrow.

It is found in the nucleus. Its function is as follows. Component of the NuA4 histone acetyltransferase complex which is involved in transcriptional activation of select genes principally by acetylation of nucleosomal histones H4 and H2A. This modification may both alter nucleosome - DNA interactions and promote interaction of the modified histones with other proteins which positively regulate transcription. May be required for transcriptional activation of E2F1 and MYC target genes during cellular proliferation. The NuA4 complex ATPase and helicase activities seem to be, at least in part, contributed by the association of RUVBL1 and RUVBL2 with EP400. Component of a SWR1-like complex that specifically mediates the removal of histone H2A.Z/H2AZ1 from the nucleosome. Regulates transcriptional activity of ZNF42. This Mus musculus (Mouse) protein is E1A-binding protein p400 (Ep400).